The following is a 316-amino-acid chain: Retinol dehydrogenase 11 (316 aa).

Residues 1-21 form a helical; Signal-anchor for type II membrane protein membrane-spanning segment; that stretch reads MFGFLLLLSLPFILYLVTPKI. Over 22-316 the chain is Cytoplasmic; that stretch reads RKMLSSGVCT…CDLLGLPVDW (295 aa). 45–51 is a binding site for NADP(+); that stretch reads GANTGIG. The residue at position 109 (lysine 109) is an N6-acetyllysine. Residue serine 174 participates in substrate binding. The Proton acceptor role is filled by tyrosine 199.

Belongs to the short-chain dehydrogenases/reductases (SDR) family. Not glycosylated. As to expression, expressed at high level in liver and testis. Expressed at lower levels in smooth muscle, thymus, submaxillary gland and epididymis. In testis, expression is restricted to pachytene spermatocytes. Also expressed in four layers of the retina, including the outer segment of rods and cones.

The protein resides in the endoplasmic reticulum membrane. It catalyses the reaction all-trans-retinol + NADP(+) = all-trans-retinal + NADPH + H(+). The catalysed reaction is 11-cis-retinol + NADP(+) = 11-cis-retinal + NADPH + H(+). It carries out the reaction 9-cis-retinol + NADP(+) = 9-cis-retinal + NADPH + H(+). The enzyme catalyses 13-cis-retinol + NADP(+) = 13-cis-retinal + NADPH + H(+). It catalyses the reaction a medium-chain primary fatty alcohol + NADP(+) = a medium-chain fatty aldehyde + NADPH + H(+). The catalysed reaction is (2E,6Z)-nona-2,6-dien-1-ol + NADP(+) = (2E,6Z)-nona-2,6-dienal + NADPH + H(+). It carries out the reaction (E)-oct-2-en-1-ol + NADP(+) = (2E)-octenal + NADPH + H(+). The enzyme catalyses (E)-non-2-en-1-ol + NADP(+) = (E)-non-2-enal + NADPH + H(+). It catalyses the reaction heptan-1-ol + NADP(+) = heptanal + NADPH + H(+). The catalysed reaction is hexan-1-ol + NADP(+) = hexanal + NADPH + H(+). It carries out the reaction decan-1-ol + NADP(+) = decanal + NADPH + H(+). The enzyme catalyses nonan-1-ol + NADP(+) = nonanal + NADPH + H(+). It catalyses the reaction octan-1-ol + NADP(+) = octanal + NADPH + H(+). The catalysed reaction is (Z)-non-6-en-1-ol + NADP(+) = (Z)-non-6-enal + NADPH + H(+). It functions in the pathway cofactor metabolism; retinol metabolism. In terms of biological role, retinol dehydrogenase with a clear preference for NADP. Displays high activity towards 9-cis, 11-cis and all-trans-retinol, and to a lesser extent on 13-cis-retinol. Also exhibits reductive activity towards toxic lipid peroxidation products such as medium-chain aldehydes trans-2-nonenal, nonanal, and cis-6-nonenal. Has no dehydrogenase activity towards steroid. Seems to be required for homeostasis of retinol in liver and testis. The protein is Retinol dehydrogenase 11 (Rdh11) of Mus musculus (Mouse).